Consider the following 364-residue polypeptide: 1-acyl-sn-glycerol-3-phosphate acyltransferase epsilon (364 aa).

A run of 2 helical transmembrane segments spans residues 15 to 35 (LLPS…WGVW) and 61 to 81 (MVLF…GDLP). The HXXXXD motif signature appears at 93 to 98 (HQSTVD). A helical membrane pass occupies residues 344–364 (LYVNTWIYGTLLGCLWVTIKA).

This sequence belongs to the 1-acyl-sn-glycerol-3-phosphate acyltransferase family. As to expression, widely expressed.

The protein resides in the endoplasmic reticulum membrane. Its subcellular location is the nucleus envelope. It is found in the mitochondrion. It carries out the reaction a 1-acyl-sn-glycero-3-phosphate + an acyl-CoA = a 1,2-diacyl-sn-glycero-3-phosphate + CoA. It catalyses the reaction 1-(9Z-octadecenoyl)-sn-glycero-3-phosphate + tetradecanoyl-CoA = 1-(9Z)-octadecenoyl-2-tetradecanoyl-sn-glycero-3-phosphate + CoA. The catalysed reaction is pentadecanoyl-CoA + 1-(9Z-octadecenoyl)-sn-glycero-3-phosphate = 1-(9Z)-octadecenoyl-2-pentadecanoyl-sn-glycero-3-phosphate + CoA. The enzyme catalyses 1-(9Z-octadecenoyl)-sn-glycero-3-phosphate + octadecanoyl-CoA = 1-(9Z-octadecenoyl)-2-octadecanoyl-sn-glycero-3-phosphate + CoA. It carries out the reaction nonadecanoyl-CoA + 1-(9Z-octadecenoyl)-sn-glycero-3-phosphate = 1-(9Z)-octadecenoyl-2-nonadecanoyl-sn-glycero-3-phosphate + CoA. It catalyses the reaction 1-(9Z-octadecenoyl)-sn-glycero-3-phosphoethanolamine + (9Z)-octadecenoyl-CoA = 1,2-di-(9Z-octadecenoyl)-sn-glycero-3-phosphoethanolamine + CoA. The catalysed reaction is 1-(9Z-octadecenoyl)-sn-glycero-3-phosphocholine + (9Z)-octadecenoyl-CoA = 1,2-di-(9Z-octadecenoyl)-sn-glycero-3-phosphocholine + CoA. The enzyme catalyses 1-(9Z-octadecenoyl)-sn-glycero-3-phospho-(1D-myo-inositol) + (5Z,8Z,11Z,14Z)-eicosatetraenoyl-CoA = 1-(9Z-octadecenoyl)-2-(5Z,8Z,11Z,14Z-eicosatetraenoyl)-sn-glycero-3-phospho-1D-myo-inositol + CoA. It carries out the reaction 1-(9Z-octadecenoyl)-sn-glycero-3-phospho-L-serine + (9Z)-octadecenoyl-CoA = 1,2-di-(9Z)-octadecenoyl-sn-glycero-3-phospho-L-serine + CoA. It catalyses the reaction 1-(9Z-octadecenoyl)-sn-glycero-3-phospho-L-serine + (5Z,8Z,11Z,14Z)-eicosatetraenoyl-CoA = 1-(9Z-octadecenoyl)-2-(5Z,8Z,11Z,14Z-eicosatetraenoyl)-sn-glycero-3-phospho-L-serine + CoA. The catalysed reaction is 1-hexadecanoyl-sn-glycero-3-phosphate + (9Z)-octadecenoyl-CoA = 1-hexadecanoyl-2-(9Z-octadecenoyl)-sn-glycero-3-phosphate + CoA. The enzyme catalyses 1-heptadecanoyl-sn-glycero-3-phosphate + (9Z)-octadecenoyl-CoA = 1-heptadecanoyl-2-(9Z)-octadecenoyl-sn-glycero-3-phosphate + CoA. It carries out the reaction 1-(5Z,8Z,11Z,14Z-eicosatetraenoyl)-sn-glycero-3-phosphate + (9Z)-octadecenoyl-CoA = 1-(5Z,8Z,11Z,14Z)-eicosatetraenoyl-2-(9Z)-octadecenoyl-sn-glycero-3-phosphate + CoA. It catalyses the reaction 1-octadecanoyl-sn-glycero-3-phosphate + (9Z)-octadecenoyl-CoA = 1-octadecanoyl-2-(9Z-octadecenoyl)-sn-glycero-3-phosphate + CoA. The catalysed reaction is 1-(9Z-octadecenoyl)-sn-glycero-3-phosphate + (5Z,8Z,11Z,14Z)-eicosatetraenoyl-CoA = 1-(9Z)-octadecenoyl-2-(5Z,8Z,11Z,14Z)-eicosatetraenoyl-sn-glycero-3-phosphate + CoA. The enzyme catalyses heptadecanoyl-CoA + 1-(9Z-octadecenoyl)-sn-glycero-3-phosphate = 1-(9Z)-octadecenoyl-2-heptadecanoyl-sn-glycero-3-phosphate + CoA. It carries out the reaction 1-(9Z-octadecenoyl)-sn-glycero-3-phosphocholine + (5Z,8Z,11Z,14Z)-eicosatetraenoyl-CoA = 1-(9Z)-octadecenoyl-2-(5Z,8Z,11Z,14Z)-icosatetraenoyl-sn-glycero-3-phosphocholine + CoA. It catalyses the reaction 1-(9Z-octadecenoyl)-sn-glycero-3-phosphate + (9Z)-octadecenoyl-CoA = 1,2-di-(9Z-octadecenoyl)-sn-glycero-3-phosphate + CoA. The catalysed reaction is 1-(9Z-octadecenoyl)-sn-glycero-3-phosphate + hexadecanoyl-CoA = 1-hexadecanoyl-2-(9Z-octadecenoyl)-sn-glycero-3-phosphate + CoA. Its pathway is phospholipid metabolism; CDP-diacylglycerol biosynthesis; CDP-diacylglycerol from sn-glycerol 3-phosphate: step 2/3. Its function is as follows. Converts 1-acyl-sn-glycerol-3-phosphate (lysophosphatidic acid or LPA) into 1,2-diacyl-sn-glycerol-3-phosphate (phosphatidic acid or PA) by incorporating an acyl moiety at the sn-2 position of the glycerol backbone. Acts on LPA containing saturated or unsaturated fatty acids C15:0-C20:4 at the sn-1 position using C18:1-CoA as the acyl donor. Also acts on lysophosphatidylethanolamine using oleoyl-CoA, but not arachidonoyl-CoA, and lysophosphatidylinositol using arachidonoyl-CoA, but not oleoyl-CoA. Activity toward lysophosphatidylglycerol not detectable. The sequence is that of 1-acyl-sn-glycerol-3-phosphate acyltransferase epsilon (AGPAT5) from Homo sapiens (Human).